Reading from the N-terminus, the 375-residue chain is DNA replication and repair protein RecF (375 aa).

An ATP-binding site is contributed by 30–37 (GENAQGKT).

This sequence belongs to the RecF family.

It is found in the cytoplasm. Functionally, the RecF protein is involved in DNA metabolism; it is required for DNA replication and normal SOS inducibility. RecF binds preferentially to single-stranded, linear DNA. It also seems to bind ATP. This Bacillus thuringiensis (strain Al Hakam) protein is DNA replication and repair protein RecF.